The sequence spans 531 residues: MDEESLESALQTYRAQLQQVELALGAGLDSSEQADLRQLQGDLKELIELTEASLVSVRKSSLLAALDEERPGRQEDAEYQAFREAITEAVEAPAAARGSGSETVPKAEAGPESAAGGQEEEEGEDEEELSGTKVSAPYYSSWGTLEYHNAMVVGTEEAEDGSAGVRVLYLYPTHKSLKPCPFFLEGKCRFKENCRFSHGQVVSLDELRPFQDPDLSSLQAGSACLAKHQDGLWHAARITDVDNGYYTVKFDSLLLREAVVEGDGILPPLRTEATESDSDSDGTGDSSYARVVGSDAVDSAQSSALCPSLAVVGSDAVDSGTCSSAFAGWEVHTRGIGSRLLTKMGYEFGKGLGRHAEGRVEPIHAVVLPRGKSLDQCVETLQKQTRVGKAGTNKPPRCRGRGARPGGRPAPRNVFDFLNEKLQGQAPGALEAGAAPAGRRSKDMYHASKSAKRALSLRLFQTEEKIERTQRDIRSIQEALARNAGRHSVASAQLQEKLAGAQRQLGQLRAQEAGLQQEQRKADTHKKMTEF.

Met1 carries the post-translational modification N-acetylmethionine. Residues 91–133 form a disordered region; the sequence is EAPAAARGSGSETVPKAEAGPESAAGGQEEEEGEDEEELSGTK. Over residues 107 to 117 the composition is skewed to low complexity; it reads AEAGPESAAGG. Over residues 118 to 129 the composition is skewed to acidic residues; the sequence is QEEEEGEDEEEL. Residues 175-201 form a C3H1-type zinc finger; the sequence is KSLKPCPFFLEGKCRFKENCRFSHGQV. The interval 267–289 is disordered; it reads PPLRTEATESDSDSDGTGDSSYA. In terms of domain architecture, G-patch spans 333–379; that stretch reads TRGIGSRLLTKMGYEFGKGLGRHAEGRVEPIHAVVLPRGKSLDQCVE. Ser373 carries the phosphoserine modification. 3 disordered regions span residues 385-409, 426-446, and 509-531; these read TRVG…GGRP, APGA…DMYH, and RAQE…MTEF. The span at 426–438 shows a compositional bias: low complexity; that stretch reads APGALEAGAAPAG. Residues 518 to 531 are compositionally biased toward basic and acidic residues; the sequence is EQRKADTHKKMTEF.

As to quaternary structure, interacts with CHD4/Mi-2; the interaction is direct. In terms of processing, ubiquitinated in case of infection by HIV-1, leading to its degradation. Ubiquitination is mediated by the CUL4A-RBX1-DDB1-DCAF1/VPRBP complex that is hijacked by HIV-1 via interaction between HIV-1 Vpr and DCAF1/VPRBP. Widely expressed.

It is found in the nucleus. In terms of biological role, transcription repressor that specifically binds the 5'-GGAG[GA]A[GA]A-3' consensus sequence. Represses transcription by recruiting the chromatin multiprotein complex NuRD to target promoters. Negatively regulates expression of EGFR, a gene involved in cell proliferation, survival and migration. Its ability to repress genes of the EGFR pathway suggest it may act as a tumor suppressor. Able to suppress breast carcinogenesis. Functionally, antagonizes the transcription repression by isoform 1 by competing for the binding of the NuRD complex. Does not bind DNA. This Homo sapiens (Human) protein is Zinc finger CCCH-type with G patch domain-containing protein (ZGPAT).